The following is a 487-amino-acid chain: Alpha-1,4-L-rhamnosidase (487 aa).

A signal peptide spans Met1–Ala30. Glu199 (proton donor) is an active-site residue.

This sequence belongs to the glycosyl hydrolase 39 family.

It is found in the periplasm. Functionally, alpha-rhamnosidase involved in ulvan degradation. Ulvan is the main polysaccharide component of the Ulvales (green seaweed) cell wall. It is composed of disaccharide building blocks comprising 3-sulfated rhamnose (Rha3S) linked to D-glucuronic acid (GlcA), L-iduronic acid (IduA), or D-xylose (Xyl). Endo-acting alpha-1,4-L-rhamnosidase cleaves rhamnose sections interspersed between xylose residues within the polymer, degrading larger oligomers with consecutive Xyl-Rha3S units that are resistant to the ulvan lyases and producing dimers Xyl-Rha3S and Xyl2S-Rha3S as the smallest products. The sequence is that of Alpha-1,4-L-rhamnosidase from Formosa agariphila (strain DSM 15362 / KCTC 12365 / LMG 23005 / KMM 3901 / M-2Alg 35-1).